We begin with the raw amino-acid sequence, 840 residues long: Probable inorganic carbon transporter subunit DabA 2 (840 aa).

Zn(2+)-binding residues include Cys356, Asp358, His540, and Cys555.

It belongs to the inorganic carbon transporter (TC 9.A.2) DabA family. As to quaternary structure, forms a complex with DabB. The cofactor is Zn(2+).

Its subcellular location is the cell inner membrane. In terms of biological role, part of an energy-coupled inorganic carbon pump. This chain is Probable inorganic carbon transporter subunit DabA 2, found in Bradyrhizobium sp. (strain ORS 278).